We begin with the raw amino-acid sequence, 711 residues long: Polyribonucleotide nucleotidyltransferase (711 aa).

2 residues coordinate Mg(2+): D486 and D492. The KH domain maps to 553–612 (PRIHTIKINPDKIKDVIGKGGSVIRALTEETGTTIEIEDDGTVKIAATDGDKAQHAIRRI). Positions 622 to 690 (GRIYNGKVTR…RQGRVRLSIK (69 aa)) constitute an S1 motif domain. The tract at residues 689 to 711 (IKEATEQTPSAAAPEAPAAEQGE) is disordered. Low complexity predominate over residues 694 to 711 (EQTPSAAAPEAPAAEQGE).

The protein belongs to the polyribonucleotide nucleotidyltransferase family. Component of the RNA degradosome, which is a multiprotein complex involved in RNA processing and mRNA degradation. Mg(2+) is required as a cofactor.

The protein localises to the cytoplasm. It carries out the reaction RNA(n+1) + phosphate = RNA(n) + a ribonucleoside 5'-diphosphate. Involved in mRNA degradation. Catalyzes the phosphorolysis of single-stranded polyribonucleotides processively in the 3'- to 5'-direction. The protein is Polyribonucleotide nucleotidyltransferase of Klebsiella pneumoniae subsp. pneumoniae (strain ATCC 700721 / MGH 78578).